Consider the following 588-residue polypeptide: L-fucose isomerase (588 aa).

Active-site proton acceptor residues include glutamate 335 and aspartate 359. 3 residues coordinate Mn(2+): glutamate 335, aspartate 359, and histidine 525.

It belongs to the L-fucose isomerase family. The cofactor is Mn(2+).

The protein resides in the cytoplasm. The catalysed reaction is L-fucose = L-fuculose. It functions in the pathway carbohydrate degradation; L-fucose degradation; L-lactaldehyde and glycerone phosphate from L-fucose: step 1/3. Functionally, converts the aldose L-fucose into the corresponding ketose L-fuculose. The chain is L-fucose isomerase from Streptococcus pneumoniae (strain Taiwan19F-14).